The primary structure comprises 277 residues: Putative glucose-6-phosphate/phosphate-translocator-like protein 1 (277 aa).

Helical transmembrane passes span 8–28 (VLPSLTAIVGIGIYFAIWWAL), 46–66 (LWLTLTLSLACGSLMMLVSWV), 124–143 (MIGFMGAMISNLAFVFRNIF), 153–173 (VSVMNYYACLSMMSLLIVTPF), and 230–250 (PLKHVNALGAAIAILGTFIYS).

It belongs to the TPT transporter family. GPT (TC 2.A.7.9) subfamily.

It is found in the membrane. The polypeptide is Putative glucose-6-phosphate/phosphate-translocator-like protein 1 (Arabidopsis thaliana (Mouse-ear cress)).